A 124-amino-acid polypeptide reads, in one-letter code: Ribonuclease pancreatic (124 aa).

The span at 1 to 13 shows a compositional bias: basic and acidic residues; that stretch reads KETAAAKFERQHM. Residues 1-22 are disordered; the sequence is KETAAAKFERQHMDSSTSAASS. 2 residues coordinate substrate: Lys7 and Arg10. The active-site Proton acceptor is the His12. 4 cysteine pairs are disulfide-bonded: Cys26-Cys84, Cys40-Cys95, Cys58-Cys110, and Cys65-Cys72. N-linked (GlcNAc...) asparagine glycosylation occurs at Asn34. Substrate contacts are provided by residues 41–45, Lys66, and Arg85; that span reads KPVNT. His119 serves as the catalytic Proton donor.

This sequence belongs to the pancreatic ribonuclease family. As to quaternary structure, monomer. Interacts with and forms tight 1:1 complexes with RNH1. Dimerization of two such complexes may occur. Interaction with RNH1 inhibits this protein. As to expression, pancreas.

It localises to the secreted. The catalysed reaction is an [RNA] containing cytidine + H2O = an [RNA]-3'-cytidine-3'-phosphate + a 5'-hydroxy-ribonucleotide-3'-[RNA].. It catalyses the reaction an [RNA] containing uridine + H2O = an [RNA]-3'-uridine-3'-phosphate + a 5'-hydroxy-ribonucleotide-3'-[RNA].. Functionally, endonuclease that catalyzes the cleavage of RNA on the 3' side of pyrimidine nucleotides. Acts on single-stranded and double-stranded RNA. This is Ribonuclease pancreatic (RNASE1) from Bison bison (American bison).